A 200-amino-acid chain; its full sequence is Snake venom metalloproteinase rhomb-I (200 aa).

The 197-residue stretch at 4-200 (KYIELVVVAD…RKPQCILNKP (197 aa)) folds into the Peptidase M12B domain. Residues glutamate 7 and aspartate 91 each coordinate Ca(2+). Disulfide bonds link cysteine 115-cysteine 195, cysteine 155-cysteine 179, and cysteine 157-cysteine 162. Position 140 (histidine 140) interacts with Zn(2+). The active site involves glutamate 141. Histidine 144 and histidine 150 together coordinate Zn(2+). Ca(2+) contacts are provided by cysteine 195 and asparagine 198.

As to quaternary structure, monomer. Requires Zn(2+) as cofactor. In terms of tissue distribution, expressed by the venom gland.

The protein localises to the secreted. Snake venom zinc metalloproteinase that induces hemorrhage. This chain is Snake venom metalloproteinase rhomb-I, found in Lachesis muta rhombeata (Bushmaster).